The following is a 310-amino-acid chain: Probable GTP 3',8-cyclase (310 aa).

In terms of domain architecture, Radical SAM core spans K5–R218. R14 is a GTP binding site. [4Fe-4S] cluster is bound by residues C21, C25, and C28. K62 lines the GTP pocket. G66 is an S-adenosyl-L-methionine binding site. T91 is a GTP binding site. S115 is a binding site for S-adenosyl-L-methionine. K153 is a binding site for GTP. C251, C254, and C268 together coordinate [4Fe-4S] cluster.

It belongs to the radical SAM superfamily. MoaA family. [4Fe-4S] cluster serves as cofactor.

It catalyses the reaction GTP + AH2 + S-adenosyl-L-methionine = (8S)-3',8-cyclo-7,8-dihydroguanosine 5'-triphosphate + 5'-deoxyadenosine + L-methionine + A + H(+). It functions in the pathway cofactor biosynthesis; molybdopterin biosynthesis. In terms of biological role, catalyzes the cyclization of GTP to (8S)-3',8-cyclo-7,8-dihydroguanosine 5'-triphosphate. The chain is Probable GTP 3',8-cyclase from Pyrobaculum aerophilum (strain ATCC 51768 / DSM 7523 / JCM 9630 / CIP 104966 / NBRC 100827 / IM2).